Reading from the N-terminus, the 601-residue chain is Glutamyl-tRNA(Gln) amidotransferase subunit B, mitochondrial (601 aa).

The transit peptide at 1–55 (MLRPWLRQCPRATRSLACPQCHLPRPQTARRALRPLPALSLSHPIRSLQTTTTES) directs the protein to the mitochondrion.

Belongs to the GatB/GatE family. GatB subfamily. As to quaternary structure, subunit of the heterotrimeric GatCAB amidotransferase (AdT) complex, composed of A, B and C subunits.

The protein resides in the mitochondrion. The enzyme catalyses L-glutamyl-tRNA(Gln) + L-glutamine + ATP + H2O = L-glutaminyl-tRNA(Gln) + L-glutamate + ADP + phosphate + H(+). Functionally, allows the formation of correctly charged Gln-tRNA(Gln) through the transamidation of misacylated Glu-tRNA(Gln) in the mitochondria. The reaction takes place in the presence of glutamine and ATP through an activated gamma-phospho-Glu-tRNA(Gln). This Aspergillus niger (strain ATCC MYA-4892 / CBS 513.88 / FGSC A1513) protein is Glutamyl-tRNA(Gln) amidotransferase subunit B, mitochondrial.